The sequence spans 156 residues: Transcription elongation factor GreA (156 aa).

Residues 46 to 67 (AEYHAAREKQSFIEGRIKELEA) are a coiled coil.

Belongs to the GreA/GreB family.

In terms of biological role, necessary for efficient RNA polymerase transcription elongation past template-encoded arresting sites. The arresting sites in DNA have the property of trapping a certain fraction of elongating RNA polymerases that pass through, resulting in locked ternary complexes. Cleavage of the nascent transcript by cleavage factors such as GreA or GreB allows the resumption of elongation from the new 3'terminus. GreA releases sequences of 2 to 3 nucleotides. In Cereibacter sphaeroides (strain ATCC 17029 / ATH 2.4.9) (Rhodobacter sphaeroides), this protein is Transcription elongation factor GreA.